Reading from the N-terminus, the 304-residue chain is Probable 5-dehydro-4-deoxyglucarate dehydratase (304 aa).

It belongs to the DapA family.

The enzyme catalyses 5-dehydro-4-deoxy-D-glucarate + H(+) = 2,5-dioxopentanoate + CO2 + H2O. The protein operates within carbohydrate acid metabolism; D-glucarate degradation; 2,5-dioxopentanoate from D-glucarate: step 2/2. The protein is Probable 5-dehydro-4-deoxyglucarate dehydratase of Arthrobacter sp. (strain FB24).